Reading from the N-terminus, the 189-residue chain is MIVILNNGGQYVHRIQRSLKYLEVPAKIVPNSTTLEEIIADSEIKGIILSGGPDITKATNCENIALNSEIPVLGICLGHQLISKAYGGHVSRADSEEYASITIYVKEENDLFKGVPSKFTAWASHMDEVKVTPGCFEILAYSDICGVESIKHKEKSIYGVQFHPEVSHTEYGDVILKNFCKKCGFEFEE.

Positions 1–189 (MIVILNNGGQ…CKKCGFEFEE (189 aa)) constitute a Glutamine amidotransferase type-1 domain. Cys76 acts as the Nucleophile in catalysis. Residues His163 and Glu165 contribute to the active site.

As to quaternary structure, heterodimer composed of a glutamine amidotransferase subunit (A) and a GMP-binding subunit (B).

The catalysed reaction is XMP + L-glutamine + ATP + H2O = GMP + L-glutamate + AMP + diphosphate + 2 H(+). It participates in purine metabolism; GMP biosynthesis; GMP from XMP (L-Gln route): step 1/1. In terms of biological role, catalyzes the synthesis of GMP from XMP. The sequence is that of GMP synthase [glutamine-hydrolyzing] subunit A from Methanococcus maripaludis (strain C6 / ATCC BAA-1332).